Here is a 479-residue protein sequence, read N- to C-terminus: Glutamate--tRNA ligase (479 aa).

The short motif at 21 to 31 (PSPTGYLHVGG) is the 'HIGH' region element. The short motif at 248 to 252 (KLSKR) is the 'KMSKS' region element. K251 contributes to the ATP binding site.

It belongs to the class-I aminoacyl-tRNA synthetase family. Glutamate--tRNA ligase type 1 subfamily. In terms of assembly, monomer.

It is found in the cytoplasm. It catalyses the reaction tRNA(Glu) + L-glutamate + ATP = L-glutamyl-tRNA(Glu) + AMP + diphosphate. In terms of biological role, catalyzes the attachment of glutamate to tRNA(Glu) in a two-step reaction: glutamate is first activated by ATP to form Glu-AMP and then transferred to the acceptor end of tRNA(Glu). The chain is Glutamate--tRNA ligase from Haemophilus ducreyi (strain 35000HP / ATCC 700724).